An 847-amino-acid chain; its full sequence is Cancer-associated gene 1 protein homolog (847 aa).

Residues E118 to E161 are disordered. A coiled-coil region spans residues N377–T567.

This is Cancer-associated gene 1 protein homolog (Cage1) from Rattus norvegicus (Rat).